The chain runs to 160 residues: SsrA-binding protein (160 aa).

It belongs to the SmpB family.

It is found in the cytoplasm. Required for rescue of stalled ribosomes mediated by trans-translation. Binds to transfer-messenger RNA (tmRNA), required for stable association of tmRNA with ribosomes. tmRNA and SmpB together mimic tRNA shape, replacing the anticodon stem-loop with SmpB. tmRNA is encoded by the ssrA gene; the 2 termini fold to resemble tRNA(Ala) and it encodes a 'tag peptide', a short internal open reading frame. During trans-translation Ala-aminoacylated tmRNA acts like a tRNA, entering the A-site of stalled ribosomes, displacing the stalled mRNA. The ribosome then switches to translate the ORF on the tmRNA; the nascent peptide is terminated with the 'tag peptide' encoded by the tmRNA and targeted for degradation. The ribosome is freed to recommence translation, which seems to be the essential function of trans-translation. This is SsrA-binding protein from Actinobacillus succinogenes (strain ATCC 55618 / DSM 22257 / CCUG 43843 / 130Z).